The sequence spans 163 residues: 3-isopropylmalate dehydratase small subunit 2 (163 aa).

This sequence belongs to the LeuD family. LeuD type 2 subfamily. Heterodimer of LeuC and LeuD.

It carries out the reaction (2R,3S)-3-isopropylmalate = (2S)-2-isopropylmalate. The protein operates within amino-acid biosynthesis; L-leucine biosynthesis; L-leucine from 3-methyl-2-oxobutanoate: step 2/4. In terms of biological role, catalyzes the isomerization between 2-isopropylmalate and 3-isopropylmalate, via the formation of 2-isopropylmaleate. The sequence is that of 3-isopropylmalate dehydratase small subunit 2 (leuD2) from Pyrococcus abyssi (strain GE5 / Orsay).